Consider the following 181-residue polypeptide: Adenylate kinase (181 aa).

10–15 (GAGKGT) is an ATP binding site. The tract at residues 30 to 59 (STGELFRKNIQDGTKLGIEAKRYLDAGDLV) is NMP. Residues Thr31, Arg36, 57–59 (DLV), 85–88 (GYPR), and Gln92 contribute to the AMP site. An LID region spans residues 126 to 132 (GRGRADD). Residue Arg127 participates in ATP binding. 2 residues coordinate AMP: Arg129 and Arg140. Gly166 contributes to the ATP binding site.

Belongs to the adenylate kinase family. As to quaternary structure, monomer.

It localises to the cytoplasm. It carries out the reaction AMP + ATP = 2 ADP. It functions in the pathway purine metabolism; AMP biosynthesis via salvage pathway; AMP from ADP: step 1/1. In terms of biological role, catalyzes the reversible transfer of the terminal phosphate group between ATP and AMP. Plays an important role in cellular energy homeostasis and in adenine nucleotide metabolism. This Mycobacterium marinum (strain ATCC BAA-535 / M) protein is Adenylate kinase.